The following is a 61-amino-acid chain: Small ribosomal subunit protein uS14 (61 aa).

The Zn(2+) site is built by Cys24, Cys27, Cys40, and Cys43.

The protein belongs to the universal ribosomal protein uS14 family. Zinc-binding uS14 subfamily. As to quaternary structure, part of the 30S ribosomal subunit. Contacts proteins S3 and S10. Zn(2+) is required as a cofactor.

In terms of biological role, binds 16S rRNA, required for the assembly of 30S particles and may also be responsible for determining the conformation of the 16S rRNA at the A site. This is Small ribosomal subunit protein uS14 from Geobacillus thermodenitrificans (strain NG80-2).